The chain runs to 112 residues: FK506-binding protein 1 (112 aa).

The span at 1-10 (MSAPATTQVE) shows a compositional bias: polar residues. Positions 1 to 20 (MSAPATTQVEILQEGDGKTF) are disordered. The 89-residue stretch at 24–112 (GDLVTIHYTG…LFDVELLNVN (89 aa)) folds into the PPIase FKBP-type domain.

It belongs to the FKBP-type PPIase family. FKBP1 subfamily.

It is found in the cytoplasm. It catalyses the reaction [protein]-peptidylproline (omega=180) = [protein]-peptidylproline (omega=0). Inhibited by both FK506 and rapamycin. Functionally, PPIases accelerate the folding of proteins. It catalyzes the cis-trans isomerization of proline imidic peptide bonds in oligopeptides. This chain is FK506-binding protein 1 (FPR1), found in Debaryomyces hansenii (strain ATCC 36239 / CBS 767 / BCRC 21394 / JCM 1990 / NBRC 0083 / IGC 2968) (Yeast).